A 266-amino-acid chain; its full sequence is Regulatory protein RecX (266 aa).

Belongs to the RecX family.

Its subcellular location is the cytoplasm. Its function is as follows. Modulates RecA activity. The sequence is that of Regulatory protein RecX from Enterococcus faecalis (strain ATCC 700802 / V583).